The sequence spans 172 residues: WW domain binding protein VOPP1 (172 aa).

A signal peptide spans 1–22 (MARPLGRVAALLLGLLMECTEA). Residues 23–60 (KKHCWYFEGLYPTYYICRSYEDCCGSRCCVRALSIQRL) are Extracellular-facing. The chain crosses the membrane as a helical span at residues 61–81 (WYFWFLLMMGVLFCCGAGFFI). Residues 82 to 172 (RRRMYPPPLI…PPYEQVVKDK (91 aa)) are Cytoplasmic-facing. Residues 139-172 (QVQPNSPHGGTTYPPPPSYCNTPPPPYEQVVKDK) form a disordered region. The segment covering 151-165 (YPPPPSYCNTPPPPY) has biased composition (pro residues).

It belongs to the VOPP1/ECOP family. As to quaternary structure, interacts with WWOX (via WW domain).

The protein resides in the cytoplasmic vesicle membrane. The protein localises to the late endosome membrane. Its subcellular location is the lysosome membrane. Increases the transcriptional activity of NFKB1 by facilitating its nuclear translocation, DNA-binding and associated apoptotic response, when overexpressed. May sequester WWOX in lysosomal vesicles and thereby regulate WWOX role as tumor suppressor. This chain is WW domain binding protein VOPP1, found in Rattus norvegicus (Rat).